Consider the following 632-residue polypeptide: 2-hydroxyacyl-CoA lyase 2 (632 aa).

Residues 13–33 (LFPSFLLLACGTLVAALLGAA) form a helical membrane-spanning segment. Glu-98 is a thiamine diphosphate binding site. The segment at 470-550 (DFVGTAAHLV…VMALVGNDAG (81 aa)) is thiamine pyrophosphate binding. Mg(2+) contacts are provided by Asp-521 and Asn-547.

The protein belongs to the TPP enzyme family. It depends on Mg(2+) as a cofactor. Thiamine diphosphate serves as cofactor. Expressed in all tissues tested, with highest expression in heart, pancreas and placenta.

It is found in the endoplasmic reticulum membrane. It carries out the reaction 2-hydroxyoctadecanoyl-CoA = heptadecanal + formyl-CoA. The catalysed reaction is (2R)-hydroxyhexadecanoyl-CoA = pentadecanal + formyl-CoA. Functionally, endoplasmic reticulum 2-OH acyl-CoA lyase involved in the cleavage (C1 removal) reaction in the fatty acid alpha-oxydation in a thiamine pyrophosphate (TPP)-dependent manner. Involved in the phytosphingosine degradation pathway. This is 2-hydroxyacyl-CoA lyase 2 from Homo sapiens (Human).